A 669-amino-acid chain; its full sequence is Dymeclin (669 aa).

G2 is lipidated: N-myristoyl glycine.

It belongs to the dymeclin family. In terms of processing, myristoylated in vitro; myristoylation is not essential for protein targeting to Golgi compartment.

Its subcellular location is the cytoplasm. The protein localises to the golgi apparatus. Functionally, necessary for correct organization of Golgi apparatus. The polypeptide is Dymeclin (DYM) (Gallus gallus (Chicken)).